The primary structure comprises 507 residues: MRRHLQWSIKQLTSSYADGQLSPRRVTEQALEDSVNLKTLNAFVRLTPEEARQQAQQSEQRYQKKQPSSGLDGVTIAIKDNFCTENVHTTCASRMLQDFVPPYDATVCSRLRQAGAVLLGKTNMDQFAMGAGTVDSIYGPTKNIWSEDLTQNNWRIAGGSSGGSASAVAAGLCFAGIGSDTGGSTRNPASYCGVVGLKPTYGLVSRHGLIPLVNSMDVPGILARSVSDCVEVLNAVAGPDGKDSTTIRQPFTKLQLPEVDGLDLQTVRIGIPKEYHCNGLSAEVLETWTKVADLLECAGASVQQVSLPNTAASIFVYSILNQCEVASNMARYDGIEFGHRAADERSTEQLYAQSRAEGFNDVVKTRILTGNFLLLRKNYDHYFEKALRVRRLIAEDFLKVFEAPSKEDRVDILLTPTTLTEAPLYKDFSSLSNRDQCAVQDFCTQPANMAGIPAVSIPIRLSRSGLPLSLQLMSRSLNEQLLLSVARWIEAQVAFDSLDHRLEQKLS.

Catalysis depends on charge relay system residues Lys79 and Ser160. Ser184 serves as the catalytic Acyl-ester intermediate.

It belongs to the amidase family. GatA subfamily. As to quaternary structure, subunit of the heterotrimeric GatCAB amidotransferase (AdT) complex, composed of A, B and C subunits.

Its subcellular location is the mitochondrion. The enzyme catalyses L-glutamyl-tRNA(Gln) + L-glutamine + ATP + H2O = L-glutaminyl-tRNA(Gln) + L-glutamate + ADP + phosphate + H(+). Allows the formation of correctly charged Gln-tRNA(Gln) through the transamidation of misacylated Glu-tRNA(Gln) in the mitochondria. The reaction takes place in the presence of glutamine and ATP through an activated gamma-phospho-Glu-tRNA(Gln). This is Glutamyl-tRNA(Gln) amidotransferase subunit A, mitochondrial from Drosophila pseudoobscura pseudoobscura (Fruit fly).